The primary structure comprises 591 residues: Aspartate--tRNA(Asp/Asn) ligase (591 aa).

Residue glutamate 175 participates in L-aspartate binding. The aspartate stretch occupies residues 199-202; sequence QQFK. Arginine 221 and histidine 453 together coordinate L-aspartate. An ATP-binding site is contributed by 221–223; sequence RDE. Residue glutamate 486 coordinates ATP. Residue arginine 493 participates in L-aspartate binding. 538 to 541 serves as a coordination point for ATP; sequence GIDR.

Belongs to the class-II aminoacyl-tRNA synthetase family. Type 1 subfamily. In terms of assembly, homodimer.

It is found in the cytoplasm. The enzyme catalyses tRNA(Asx) + L-aspartate + ATP = L-aspartyl-tRNA(Asx) + AMP + diphosphate. Its function is as follows. Aspartyl-tRNA synthetase with relaxed tRNA specificity since it is able to aspartylate not only its cognate tRNA(Asp) but also tRNA(Asn). Reaction proceeds in two steps: L-aspartate is first activated by ATP to form Asp-AMP and then transferred to the acceptor end of tRNA(Asp/Asn). In Cereibacter sphaeroides (strain ATCC 17025 / ATH 2.4.3) (Rhodobacter sphaeroides), this protein is Aspartate--tRNA(Asp/Asn) ligase.